The following is a 270-amino-acid chain: 4-hydroxy-tetrahydrodipicolinate reductase (270 aa).

NAD(+) contacts are provided by residues 11 to 16 and Glu-37; that span reads GAGGRM. Arg-38 is a binding site for NADP(+). NAD(+) is bound by residues 101–103 and 125–128; these read GTT and APNM. His-158 (proton donor/acceptor) is an active-site residue. His-159 provides a ligand contact to (S)-2,3,4,5-tetrahydrodipicolinate. The Proton donor role is filled by Lys-162. 168–169 provides a ligand contact to (S)-2,3,4,5-tetrahydrodipicolinate; it reads GT.

It belongs to the DapB family.

Its subcellular location is the cytoplasm. The catalysed reaction is (S)-2,3,4,5-tetrahydrodipicolinate + NAD(+) + H2O = (2S,4S)-4-hydroxy-2,3,4,5-tetrahydrodipicolinate + NADH + H(+). The enzyme catalyses (S)-2,3,4,5-tetrahydrodipicolinate + NADP(+) + H2O = (2S,4S)-4-hydroxy-2,3,4,5-tetrahydrodipicolinate + NADPH + H(+). It functions in the pathway amino-acid biosynthesis; L-lysine biosynthesis via DAP pathway; (S)-tetrahydrodipicolinate from L-aspartate: step 4/4. Functionally, catalyzes the conversion of 4-hydroxy-tetrahydrodipicolinate (HTPA) to tetrahydrodipicolinate. The chain is 4-hydroxy-tetrahydrodipicolinate reductase from Shewanella oneidensis (strain ATCC 700550 / JCM 31522 / CIP 106686 / LMG 19005 / NCIMB 14063 / MR-1).